The sequence spans 886 residues: Inter-alpha-trypsin inhibitor heavy chain H3 (886 aa).

Residues 1-18 (MWWPYLVLALLSGLEASG) form the signal peptide. Positions 19–30 (FPRSPLRLLGKR) are excised as a propeptide. The 130-residue stretch at 26-155 (LLGKRSLPEG…KVTFELTYEE (130 aa)) folds into the VIT domain. Residue Asn88 is glycosylated (N-linked (GlcNAc...) asparagine). Residues 279-439 (PKNIVFVIDI…YNFLETMALE (161 aa)) form the VWFA domain. N-linked (GlcNAc...) asparagine glycosylation occurs at Asn577. Asp646 carries the aspartate 1-(chondroitin 4-sulfate)-ester modification. The propeptide occupies 647 to 886 (PHFIIQVPGK…HTDYIVPSLF (240 aa)).

Belongs to the ITIH family. As to quaternary structure, I-alpha-I plasma protease inhibitors are assembled from one or two heavy chains (HC) and one light chain, bikunin. Pre-alpha-inhibitor (P-alpha-I) is composed of ITIH3/HC3 and bikunin. Post-translationally, heavy chains are linked to bikunin via chondroitin 4-sulfate esterified to the alpha-carboxyl of the C-terminal aspartate after propeptide cleavage.

Its subcellular location is the secreted. In terms of biological role, may act as a carrier of hyaluronan in serum or as a binding protein between hyaluronan and other matrix protein, including those on cell surfaces in tissues to regulate the localization, synthesis and degradation of hyaluronan which are essential to cells undergoing biological processes. The polypeptide is Inter-alpha-trypsin inhibitor heavy chain H3 (ITIH3) (Mesocricetus auratus (Golden hamster)).